The primary structure comprises 619 residues: Zinc finger and BTB domain-containing protein 7C (619 aa).

In terms of domain architecture, BTB spans 34-101 (CDVLLVVQEQ…AYTSTLTITA (68 aa)). Residues 129–218 (PGGDGGEEDD…DSFQAGSPGH (90 aa)) form a disordered region. The span at 133 to 173 (GGEEDDKEDDDDDEDDDDEEDEEEEEEEEEDDDDDTEDFAD) shows a compositional bias: acidic residues. The segment covering 191–208 (KTDHLTEKAYSDTPRDFP) has biased composition (basic and acidic residues). C2H2-type zinc fingers lie at residues 364 to 386 (QQCP…MRTH), 392 to 414 (YMCT…MRKH), and 420 to 442 (YLCI…MRIH). The C2H2-type 4; degenerate zinc-finger motif lies at 448–478 (YQCEFCYKSFTRSDHLHRHIKRQSCRMARPR).

As to expression, detected in normal cervical keratinocytes, and in some cervical carcinoma cell lines.

Its function is as follows. May be a tumor suppressor gene. This is Zinc finger and BTB domain-containing protein 7C (ZBTB7C) from Homo sapiens (Human).